Reading from the N-terminus, the 69-residue chain is Small, acid-soluble spore protein 1 (69 aa).

Belongs to the alpha/beta-type SASP family.

In terms of biological role, SASP are bound to spore DNA. They are double-stranded DNA-binding proteins that cause DNA to change to an a-like conformation. They protect the DNA backbone from chemical and enzymatic cleavage and are thus involved in dormant spore's high resistance to UV light. This chain is Small, acid-soluble spore protein 1 (Su-1), found in Sporosarcina ureae.